The chain runs to 348 residues: Histidinol-phosphate aminotransferase (348 aa).

The residue at position 210 (K210) is an N6-(pyridoxal phosphate)lysine.

It belongs to the class-II pyridoxal-phosphate-dependent aminotransferase family. Histidinol-phosphate aminotransferase subfamily. In terms of assembly, homodimer. Pyridoxal 5'-phosphate serves as cofactor.

The enzyme catalyses L-histidinol phosphate + 2-oxoglutarate = 3-(imidazol-4-yl)-2-oxopropyl phosphate + L-glutamate. Its pathway is amino-acid biosynthesis; L-histidine biosynthesis; L-histidine from 5-phospho-alpha-D-ribose 1-diphosphate: step 7/9. This is Histidinol-phosphate aminotransferase from Pseudomonas putida (strain ATCC 47054 / DSM 6125 / CFBP 8728 / NCIMB 11950 / KT2440).